A 62-amino-acid chain; its full sequence is Metallothionein (62 aa).

Met1 carries the N-acetylmethionine modification. Positions 1 to 30 (MDPQDCKCETGASCSCGTTCSCSNCKCTSC) are beta. Cys6, Cys8, Cys14, Cys16, Cys20, Cys22, Cys25, Cys27, Cys30, Cys34, Cys35, Cys37, Cys38, Cys42, Cys45, Cys49, Cys51, Cys58, Cys60, and Cys61 together coordinate a divalent metal cation. The segment at 31 to 62 (KKSCCSCCPAECSKCSQGCHCEKGSKKCSCCN) is alpha.

The protein belongs to the metallothionein superfamily. Type 1 family.

Functionally, metallothioneins have a high content of cysteine residues that bind various heavy metals. This chain is Metallothionein (mt-a), found in Xenopus laevis (African clawed frog).